A 702-amino-acid chain; its full sequence is Ribosomal RNA large subunit methyltransferase K/L (702 aa).

Residues 43-154 (LVYQSLMWSR…KETASIALDL (112 aa)) form the THUMP domain.

It belongs to the methyltransferase superfamily. RlmKL family.

Its subcellular location is the cytoplasm. The catalysed reaction is guanosine(2445) in 23S rRNA + S-adenosyl-L-methionine = N(2)-methylguanosine(2445) in 23S rRNA + S-adenosyl-L-homocysteine + H(+). The enzyme catalyses guanosine(2069) in 23S rRNA + S-adenosyl-L-methionine = N(2)-methylguanosine(2069) in 23S rRNA + S-adenosyl-L-homocysteine + H(+). Specifically methylates the guanine in position 2445 (m2G2445) and the guanine in position 2069 (m7G2069) of 23S rRNA. The protein is Ribosomal RNA large subunit methyltransferase K/L of Escherichia coli O6:H1 (strain CFT073 / ATCC 700928 / UPEC).